Here is a 418-residue protein sequence, read N- to C-terminus: Pyrophosphate--fructose 6-phosphate 1-phosphotransferase (418 aa).

Gly-13 contacts diphosphate. Asn-111 serves as a coordination point for Mg(2+). Residues 139–141, 187–189, Glu-244, and 295–298 contribute to the substrate site; these read TID, MGR, and YLQR. The active-site Proton acceptor is the Asp-141.

It belongs to the phosphofructokinase type A (PFKA) family. PPi-dependent PFK group II subfamily. Clade 'B2' sub-subfamily. Homodimer. Mg(2+) is required as a cofactor.

It is found in the cytoplasm. It carries out the reaction beta-D-fructose 6-phosphate + diphosphate = beta-D-fructose 1,6-bisphosphate + phosphate + H(+). It participates in carbohydrate degradation; glycolysis; D-glyceraldehyde 3-phosphate and glycerone phosphate from D-glucose: step 3/4. Non-allosteric. Its function is as follows. Catalyzes the phosphorylation of D-fructose 6-phosphate, the first committing step of glycolysis. Uses inorganic phosphate (PPi) as phosphoryl donor instead of ATP like common ATP-dependent phosphofructokinases (ATP-PFKs), which renders the reaction reversible, and can thus function both in glycolysis and gluconeogenesis. Consistently, PPi-PFK can replace the enzymes of both the forward (ATP-PFK) and reverse (fructose-bisphosphatase (FBPase)) reactions. The polypeptide is Pyrophosphate--fructose 6-phosphate 1-phosphotransferase (Xanthomonas campestris pv. campestris (strain B100)).